We begin with the raw amino-acid sequence, 536 residues long: Apolipoprotein N-acyltransferase (536 aa).

The next 7 helical transmembrane spans lie at 10–30 (IASGIILAWGWKRAVIALLAG), 42–62 (AWPVLFITFPIAVWLIDGSAA), 76–96 (WWFGFGYFVPGLYWIGYAFLV), 107–127 (AAICGLPAYLALFTALGFALA), 136–158 (LRILSLAVSLTISEWLRGHLLTG), 181–201 (IGIWGLTLLTVAIFASPAVLI), and 212–232 (AVPAMALGVLAAMTVFGGIRL). The 254-residue stretch at 248-501 (MQPNLPQDAR…EGVLDSGLPA (254 aa)) folds into the CN hydrolase domain. Catalysis depends on E295, which acts as the Proton acceptor. The active site involves K360. The Nucleophile role is filled by C413. A helical transmembrane segment spans residues 509–529 (ARVGELPAAVLVALVMMLVLL).

The protein belongs to the CN hydrolase family. Apolipoprotein N-acyltransferase subfamily.

It localises to the cell inner membrane. The enzyme catalyses N-terminal S-1,2-diacyl-sn-glyceryl-L-cysteinyl-[lipoprotein] + a glycerophospholipid = N-acyl-S-1,2-diacyl-sn-glyceryl-L-cysteinyl-[lipoprotein] + a 2-acyl-sn-glycero-3-phospholipid + H(+). It functions in the pathway protein modification; lipoprotein biosynthesis (N-acyl transfer). In terms of biological role, catalyzes the phospholipid dependent N-acylation of the N-terminal cysteine of apolipoprotein, the last step in lipoprotein maturation. This is Apolipoprotein N-acyltransferase from Rhodopseudomonas palustris (strain ATCC BAA-98 / CGA009).